A 352-amino-acid polypeptide reads, in one-letter code: Coproporphyrin III ferrochelatase (352 aa).

Positions 52 and 121 each coordinate Fe-coproporphyrin III. Positions 181 and 269 each coordinate Fe(2+).

It belongs to the ferrochelatase family.

The protein resides in the cytoplasm. It carries out the reaction Fe-coproporphyrin III + 2 H(+) = coproporphyrin III + Fe(2+). The protein operates within porphyrin-containing compound metabolism; protoheme biosynthesis. Functionally, involved in coproporphyrin-dependent heme b biosynthesis. Catalyzes the insertion of ferrous iron into coproporphyrin III to form Fe-coproporphyrin III. This Nocardia farcinica (strain IFM 10152) protein is Coproporphyrin III ferrochelatase.